A 1652-amino-acid chain; its full sequence is Venom factor (1652 aa).

The N-terminal stretch at 1 to 22 (MEGMALYLVAALLIGFPASSFG) is a signal peptide. The Mg(2+) site is built by Pro519, Asp542, Val543, and Asp545. Disulfide bonds link Cys547-Cys808, Cys616-Cys651, Cys684-Cys711, Cys685-Cys718, Cys698-Cys719, Cys864-Cys1502, Cys1347-Cys1478, Cys1378-Cys1447, Cys1495-Cys1500, Cys1507-Cys1579, Cys1526-Cys1650, and Cys1626-Cys1635. The propeptide occupies 657–740 (RRRRRSVVLL…REDELFLARS (84 aa)). Residues 661 to 739 (RSVVLLDSKA…KREDELFLAR (79 aa)) form a C3a-like domain region. In terms of domain architecture, Anaphylatoxin-like spans 684-719 (CCEDGMHENPMGYSCEKREKYIQEGDACKAAFLECC). The tract at residues 743-754 (EDEFFGEDNIIS) is factor B binding site. Positions 992 to 1270 (HLIITPSGCG…VVGFQGLAEY (279 aa)) are excised as a propeptide. Residues 992-1270 (HLIITPSGCG…VVGFQGLAEY (279 aa)) form a C3d-like domain region. The isoglutamyl cysteine thioester (Cys-Gln) cross-link spans 1000–1003 (CGEQ). The factor H binding site stretch occupies residues 1197 to 1260 (VLMAASTERN…GGTYGQTQAT (64 aa)). One can recognise an NTR domain in the interval 1507–1650 (CSLLNQQKKI…LSNTLTIFGC (144 aa)).

Belongs to the venom complement C3 homolog family. In terms of assembly, heterotrimer of alpha, beta and gamma chains; disulfide-linked. Is active with factor B in the presence of factor D. In terms of processing, first processed by the removal of 4 Arg residues by furin-type protease, forming two chains, alpha and gamma/beta precursor, linked by a disulfide bond. Probably, a cobrin-like protease cleaves the C3a-like domain and then the C3d-like domain, generating the mature venom factor (VF). In terms of tissue distribution, expressed by the venom gland.

It localises to the secreted. Complement-activating protein in venom. It is a structural and functional analog of complement component C3b, the activated form of C3. It binds factor B (CFB), which is subsequently cleaved by factor D (CFD) to form the bimolecular complex VF/Bb. VF/Bb is a C3/C5 convertase that cleaves both complement components C3 and C5. Structurally, it resembles the C3b degradation product C3c, which is not able to form a C3/C5 convertase. Unlike C3b/Bb, VF/Bb is a stable complex and completely resistant to the actions of complement regulatory factors H (CFH) and I (CFI). Therefore, VF continuously activates complement resulting in the depletion of complement activity. The sequence is that of Venom factor from Crotalus adamanteus (Eastern diamondback rattlesnake).